Consider the following 365-residue polypeptide: UDP-N-acetylglucosamine--N-acetylmuramyl-(pentapeptide) pyrophosphoryl-undecaprenol N-acetylglucosamine transferase (365 aa).

UDP-N-acetyl-alpha-D-glucosamine is bound by residues threonine 11–glycine 13, asparagine 124, arginine 165, serine 192, isoleucine 246, and glutamine 291.

This sequence belongs to the glycosyltransferase 28 family. MurG subfamily.

Its subcellular location is the cell inner membrane. It catalyses the reaction di-trans,octa-cis-undecaprenyl diphospho-N-acetyl-alpha-D-muramoyl-L-alanyl-D-glutamyl-meso-2,6-diaminopimeloyl-D-alanyl-D-alanine + UDP-N-acetyl-alpha-D-glucosamine = di-trans,octa-cis-undecaprenyl diphospho-[N-acetyl-alpha-D-glucosaminyl-(1-&gt;4)]-N-acetyl-alpha-D-muramoyl-L-alanyl-D-glutamyl-meso-2,6-diaminopimeloyl-D-alanyl-D-alanine + UDP + H(+). It participates in cell wall biogenesis; peptidoglycan biosynthesis. Functionally, cell wall formation. Catalyzes the transfer of a GlcNAc subunit on undecaprenyl-pyrophosphoryl-MurNAc-pentapeptide (lipid intermediate I) to form undecaprenyl-pyrophosphoryl-MurNAc-(pentapeptide)GlcNAc (lipid intermediate II). The sequence is that of UDP-N-acetylglucosamine--N-acetylmuramyl-(pentapeptide) pyrophosphoryl-undecaprenol N-acetylglucosamine transferase from Nitratidesulfovibrio vulgaris (strain DP4) (Desulfovibrio vulgaris).